A 679-amino-acid chain; its full sequence is Glycine--tRNA ligase beta subunit (679 aa).

This sequence belongs to the class-II aminoacyl-tRNA synthetase family. In terms of assembly, tetramer of two alpha and two beta subunits.

Its subcellular location is the cytoplasm. It carries out the reaction tRNA(Gly) + glycine + ATP = glycyl-tRNA(Gly) + AMP + diphosphate. This chain is Glycine--tRNA ligase beta subunit, found in Streptococcus pyogenes serotype M1.